Here is a 155-residue protein sequence, read N- to C-terminus: Small ribosomal subunit protein uS7 (155 aa).

This sequence belongs to the universal ribosomal protein uS7 family. In terms of assembly, part of the 30S ribosomal subunit. Contacts proteins S9 and S11.

In terms of biological role, one of the primary rRNA binding proteins, it binds directly to 16S rRNA where it nucleates assembly of the head domain of the 30S subunit. Is located at the subunit interface close to the decoding center, probably blocks exit of the E-site tRNA. The chain is Small ribosomal subunit protein uS7 from Malacoplasma penetrans (strain HF-2) (Mycoplasma penetrans).